The sequence spans 177 residues: Ribosome maturation factor RimM (177 aa).

Residues 96–177 (DNEFYWVDLI…KITVDWGLDY (82 aa)) form the PRC barrel domain.

The protein belongs to the RimM family. As to quaternary structure, binds ribosomal protein uS19.

It localises to the cytoplasm. An accessory protein needed during the final step in the assembly of 30S ribosomal subunit, possibly for assembly of the head region. Essential for efficient processing of 16S rRNA. May be needed both before and after RbfA during the maturation of 16S rRNA. It has affinity for free ribosomal 30S subunits but not for 70S ribosomes. This chain is Ribosome maturation factor RimM, found in Herminiimonas arsenicoxydans.